Consider the following 316-residue polypeptide: uncharacterized protein (316 aa).

The helical transmembrane segment at 12–34 (RWVCLTSVILFCFCIAVMRYGGV) threads the bilayer.

The protein localises to the membrane. This is an uncharacterized protein from Treponema pallidum (strain Nichols).